Here is a 91-residue protein sequence, read N- to C-terminus: Small ribosomal subunit protein uS19 (91 aa).

The protein belongs to the universal ribosomal protein uS19 family.

Functionally, protein S19 forms a complex with S13 that binds strongly to the 16S ribosomal RNA. In Prochlorococcus marinus (strain MIT 9303), this protein is Small ribosomal subunit protein uS19.